The sequence spans 212 residues: Large ribosomal subunit protein bL25 (212 aa).

Residues 1–25 (MSQSTIHKIAVKKRTETGKNENNRL) are disordered. A compositionally biased stretch (basic and acidic residues) spans 13–24 (KRTETGKNENNR).

The protein belongs to the bacterial ribosomal protein bL25 family. CTC subfamily. As to quaternary structure, part of the 50S ribosomal subunit; part of the 5S rRNA/L5/L18/L25 subcomplex. Contacts the 5S rRNA. Binds to the 5S rRNA independently of L5 and L18.

This is one of the proteins that binds to the 5S RNA in the ribosome where it forms part of the central protuberance. The sequence is that of Large ribosomal subunit protein bL25 from Leptospira borgpetersenii serovar Hardjo-bovis (strain JB197).